The following is a 159-amino-acid chain: Mediator of RNA polymerase II transcription subunit 10 (159 aa).

The segment at 54 to 77 (STHTKPQPPSQDDEQKGSANDPLL) is disordered.

Belongs to the Mediator complex subunit 10 family. Component of the Mediator complex.

It localises to the nucleus. In terms of biological role, component of the Mediator complex, a coactivator involved in the regulated transcription of nearly all RNA polymerase II-dependent genes. Mediator functions as a bridge to convey information from gene-specific regulatory proteins to the basal RNA polymerase II transcription machinery. Mediator is recruited to promoters by direct interactions with regulatory proteins and serves as a scaffold for the assembly of a functional preinitiation complex with RNA polymerase II and the general transcription factors. This Aspergillus fumigatus (strain ATCC MYA-4609 / CBS 101355 / FGSC A1100 / Af293) (Neosartorya fumigata) protein is Mediator of RNA polymerase II transcription subunit 10 (nut2).